The sequence spans 457 residues: Nuclear hormone receptor family member odr-7 (457 aa).

Disordered stretches follow at residues 57-95 (EQPN…DNDA) and 230-252 (KQES…LQQP). A DNA-binding region (nuclear receptor) is located at residues 327–407 (LHDCQVCLST…IGMLPENVQH (81 aa)). NR C4-type zinc fingers lie at residues 330–351 (CQVC…CAAC) and 367–395 (CKRN…MKRC). The disordered stretch occupies residues 435–457 (QPSGSAAQPITVSSSESPRHTTN).

The protein belongs to the nuclear hormone receptor family. NR0 subfamily. As to quaternary structure, heterodimer with a partner that confers DNA binding capacity or a nuclear hormone receptor whose DNA binding it inhibits. Expressed predominantly in the AWA neurons.

The protein resides in the nucleus. The protein localises to the cytoplasm. It localises to the perinuclear region. Its function is as follows. Required for the function of one pair of chemosensory neurons called AWA neurons that are involved in chemotaxis to volatile odorants. Acts in a pathway that specifies olfactory neuronal fate. Regulates the transcription of olfactory signaling molecules such as odr-10 that specify AWA neuron identity and function. Represses the expression in AWA neurons of factors such as str-2 which specify AWC neuron identity. This is Nuclear hormone receptor family member odr-7 (odr-7) from Caenorhabditis elegans.